The primary structure comprises 332 residues: uncharacterized protein (332 aa).

Residues 306–332 (EKNTSEVTEPKTGPSGTKDNYHLHSIF) form a disordered region.

This is an uncharacterized protein from Homo sapiens (Human).